The chain runs to 189 residues: UPF0398 protein LGAS_1023 (189 aa).

It belongs to the UPF0398 family.

The sequence is that of UPF0398 protein LGAS_1023 from Lactobacillus gasseri (strain ATCC 33323 / DSM 20243 / BCRC 14619 / CIP 102991 / JCM 1131 / KCTC 3163 / NCIMB 11718 / NCTC 13722 / AM63).